The sequence spans 295 residues: Chromatin modification-related protein YNG2 (295 aa).

Residues asparagine 151–aspartate 208 form a disordered region. Residues serine 156–alanine 171 are compositionally biased toward low complexity. Residues glycine 175–glutamine 190 are compositionally biased toward basic residues. A PHD-type zinc finger spans residues glutamine 233–glutamate 282. The Zn(2+) site is built by cysteine 236, cysteine 238, cysteine 249, cysteine 254, histidine 260, cysteine 263, cysteine 276, and cysteine 279.

It belongs to the ING family. Interacts with H3K4me3 and to a lesser extent with H3K4me2. Component of the NuA4 histone acetyltransferase complex.

The protein localises to the nucleus. Its function is as follows. Component of the NuA4 histone acetyltransferase complex which is involved in transcriptional activation of selected genes principally by acetylation of nucleosomal histone H4 and H2A. The NuA4 complex is also involved in DNA repair. Involved in cell cycle progression and meiosis. This Kluyveromyces lactis (strain ATCC 8585 / CBS 2359 / DSM 70799 / NBRC 1267 / NRRL Y-1140 / WM37) (Yeast) protein is Chromatin modification-related protein YNG2 (YNG2).